The following is a 207-amino-acid chain: Ribosomal RNA small subunit methyltransferase G (207 aa).

Residues Gly74, Leu79, 125 to 126, and Arg140 contribute to the S-adenosyl-L-methionine site; that span reads VE.

Belongs to the methyltransferase superfamily. RNA methyltransferase RsmG family.

The protein resides in the cytoplasm. The catalysed reaction is guanosine(527) in 16S rRNA + S-adenosyl-L-methionine = N(7)-methylguanosine(527) in 16S rRNA + S-adenosyl-L-homocysteine. Its function is as follows. Specifically methylates the N7 position of guanine in position 527 of 16S rRNA. The protein is Ribosomal RNA small subunit methyltransferase G of Shewanella loihica (strain ATCC BAA-1088 / PV-4).